The sequence spans 328 residues: DNA-directed RNA polymerase subunit alpha (328 aa).

The tract at residues 1-234 is alpha N-terminal domain (alpha-NTD); sequence MQGSVTEFLK…EQLDAFVDLR (234 aa). The segment at 248 to 328 is alpha C-terminal domain (alpha-CTD); that stretch reads FDPILLRPVD…NWPPASIAED (81 aa).

Belongs to the RNA polymerase alpha chain family. In terms of assembly, homodimer. The RNAP catalytic core consists of 2 alpha, 1 beta, 1 beta' and 1 omega subunit. When a sigma factor is associated with the core the holoenzyme is formed, which can initiate transcription.

The catalysed reaction is RNA(n) + a ribonucleoside 5'-triphosphate = RNA(n+1) + diphosphate. Its function is as follows. DNA-dependent RNA polymerase catalyzes the transcription of DNA into RNA using the four ribonucleoside triphosphates as substrates. The chain is DNA-directed RNA polymerase subunit alpha from Haemophilus influenzae (strain PittEE).